A 224-amino-acid chain; its full sequence is CRIB domain-containing protein RIC1 (224 aa).

The CRIB domain maps to 29–42; that stretch reads IGFPTDVKHVAHIG. The disordered stretch occupies residues 38–224; that stretch reads VAHIGSDGPT…SVDTTCNDII (187 aa). Polar residues-rich tracts occupy residues 69-84, 114-132, 144-155, and 215-224; these read SRGN…TNQR, PNHN…ASSD, AHGSTDSSNDQE, and SVDTTCNDII.

As to quaternary structure, interacts with ARAC11/ROP1. As to expression, expressed in columella cells from the root tip and epidermal cells at the base of lateral roots, leaves, stems, flowers, anthers, pollen and siliques.

It is found in the cytoplasm. The protein localises to the cytoskeleton. In terms of biological role, functions as a downstream effector of Rho-related GTP binding proteins of the 'Rho of Plants' (ROPs) family. Participates in the propagation of ROP GTPase signals in specific cellular responses. Required for cortical microtubule organization. Promotes microtubule bundling and formation of well-ordered microtubule arrays in the neck region of pavement cells. This restricts cell lateral expansion to generate the narrow neck morphology of pavement cells. Its function is inhibited when it interacts with activated ARAC4/ROP2. Represses ARAC4/ROP2 activation and antagonizes the RIC4-actin pathway that promotes the assembly of cortical actin microfilaments. Acts as a downstream effector of ARAC3/ROP6 which functions in a signaling pathway that negatively regulates clathrin-mediated endocytosis and internalization of PIN1 and PIN2. Required for the asymmetric auxin distribution during root gravitropism and vascular patterning. Positively regulates auxin responses, but negatively regulates ABA responses during lateral root development and primary root elongation. This is CRIB domain-containing protein RIC1 (RIC1) from Arabidopsis thaliana (Mouse-ear cress).